Consider the following 107-residue polypeptide: MKNLGNMMKQAQQMQARMQEMQSKLAEVEVNGVSAGGMVSILLNGKGELKQIKLDKSVVDPEDVEVLEDLIVAAFNDAKNKVEAHMAEETAKLMGGLKLPPGFKLPF.

It belongs to the YbaB/EbfC family. In terms of assembly, homodimer.

It is found in the cytoplasm. It localises to the nucleoid. Its function is as follows. Binds to DNA and alters its conformation. May be involved in regulation of gene expression, nucleoid organization and DNA protection. In Rhodospirillum centenum (strain ATCC 51521 / SW), this protein is Nucleoid-associated protein RC1_2305.